Consider the following 699-residue polypeptide: SPX domain-containing membrane protein At4g22990 (699 aa).

In terms of domain architecture, SPX spans 2–145 (VAFGKKLKER…GYRFTNYYVK (144 aa)). Helical transmembrane passes span 249-269 (FMSL…TYII), 280-300 (LGAA…AQLF), 317-337 (LIFS…AFDF), 339-358 (SIAV…ARAV), 377-397 (AGFV…AGLL), and 413-433 (LPGW…AISF). Positions 475–490 (IEEQGEDECDGSEEAS) are enriched in acidic residues. The segment at 475–494 (IEEQGEDECDGSEEASEDSR) is disordered. The next 5 helical transmembrane spans lie at 515–535 (LLIY…SSVI), 546–566 (SVAI…LVVG), 578–598 (ILLV…HVVV), 606–626 (VCSG…NLSL), and 671–691 (MLLN…IVAT).

It belongs to the major facilitator superfamily.

The protein resides in the membrane. This Arabidopsis thaliana (Mouse-ear cress) protein is SPX domain-containing membrane protein At4g22990.